The chain runs to 133 residues: Transcription antitermination protein NusB (133 aa).

It belongs to the NusB family.

Functionally, involved in transcription antitermination. Required for transcription of ribosomal RNA (rRNA) genes. Binds specifically to the boxA antiterminator sequence of the ribosomal RNA (rrn) operons. The chain is Transcription antitermination protein NusB from Clostridium novyi (strain NT).